The primary structure comprises 170 residues: ATP synthase subunit b (170 aa).

A helical membrane pass occupies residues 11-31 (AFTFGDAFFTLFAFAILLVLI).

It belongs to the ATPase B chain family. F-type ATPases have 2 components, F(1) - the catalytic core - and F(0) - the membrane proton channel. F(1) has five subunits: alpha(3), beta(3), gamma(1), delta(1), epsilon(1). F(0) has three main subunits: a(1), b(2) and c(10-14). The alpha and beta chains form an alternating ring which encloses part of the gamma chain. F(1) is attached to F(0) by a central stalk formed by the gamma and epsilon chains, while a peripheral stalk is formed by the delta and b chains.

It localises to the cell membrane. F(1)F(0) ATP synthase produces ATP from ADP in the presence of a proton or sodium gradient. F-type ATPases consist of two structural domains, F(1) containing the extramembraneous catalytic core and F(0) containing the membrane proton channel, linked together by a central stalk and a peripheral stalk. During catalysis, ATP synthesis in the catalytic domain of F(1) is coupled via a rotary mechanism of the central stalk subunits to proton translocation. Functionally, component of the F(0) channel, it forms part of the peripheral stalk, linking F(1) to F(0). In Listeria monocytogenes serotype 4b (strain F2365), this protein is ATP synthase subunit b.